Reading from the N-terminus, the 189-residue chain is MSIKSDKWIRRMAEEHKMIEPFVPDQVRAAEDGRKIVSYGTSSYGYDIRCADEFKIFTNINSTIVDPKNFDEGSFVDFKGDVCIIPPNSFALARTVEYFRIPRTVLTVCLGKSTYARCGIIVNVTPFEPEWEGYVTLEFSNTTPLPAKIYANEGVAQVLFFESDEVCDVSYADRGGKYQGQRGVTLPKT.

DCTP is bound by residues 112–117 (KSTYAR), 136–138 (TLE), Gln157, Tyr171, and Gln181. Glu138 (proton donor/acceptor) is an active-site residue.

It belongs to the dCTP deaminase family. In terms of assembly, homotrimer.

The catalysed reaction is dCTP + H2O + H(+) = dUTP + NH4(+). It functions in the pathway pyrimidine metabolism; dUMP biosynthesis; dUMP from dCTP (dUTP route): step 1/2. In terms of biological role, catalyzes the deamination of dCTP to dUTP. This is dCTP deaminase from Burkholderia mallei (strain NCTC 10247).